Consider the following 118-residue polypeptide: NADH-ubiquinone oxidoreductase chain 3 (118 aa).

Helical transmembrane passes span Ile9 to Ala29, Leu62 to Val82, and Ile87 to Leu107.

This sequence belongs to the complex I subunit 3 family.

It localises to the mitochondrion membrane. The enzyme catalyses a ubiquinone + NADH + 5 H(+)(in) = a ubiquinol + NAD(+) + 4 H(+)(out). Functionally, core subunit of the mitochondrial membrane respiratory chain NADH dehydrogenase (Complex I) that is believed to belong to the minimal assembly required for catalysis. Complex I functions in the transfer of electrons from NADH to the respiratory chain. The immediate electron acceptor for the enzyme is believed to be ubiquinone. This is NADH-ubiquinone oxidoreductase chain 3 (ND3) from Triticum aestivum (Wheat).